A 92-amino-acid chain; its full sequence is Acylphosphatase (92 aa).

In terms of domain architecture, Acylphosphatase-like spans 5-92 (RAHVFISGRV…GKEGIFTIVW (88 aa)). Catalysis depends on residues Arg20 and Asn38.

The protein belongs to the acylphosphatase family.

The enzyme catalyses an acyl phosphate + H2O = a carboxylate + phosphate + H(+). This is Acylphosphatase (acyP) from Chloroflexus aurantiacus (strain ATCC 29366 / DSM 635 / J-10-fl).